The sequence spans 1273 residues: Lysine-specific histone demethylase 2 (1273 aa).

The span at 199 to 230 (ENFFDANSPSSQQFPSTYPSRSQNPLSSSGDG) shows a compositional bias: polar residues. Positions 199 to 237 (ENFFDANSPSSQQFPSTYPSRSQNPLSSSGDGSTAIHAG) are disordered. Positions 247–307 (FSNYPYPLDA…LSKSVDNAVL (61 aa)) form a coiled coil. The 97-residue stretch at 394–490 (AAEAARKCNL…YGCLSFDSSF (97 aa)) folds into the SWIRM domain. Residues 509 to 551 (IAVV…ILEA), Thr517, Glu550, Arg558, and 572 to 573 (TQ) each bind FAD. The interval 542–1198 (LPPKVIILEA…GKILRYQRLT (657 aa)) is demethylase activity. Positions 571–596 (ATQINHHTSNSNSISSNSTSLNPKDV) are disordered. Residues 574–590 (INHHTSNSNSISSNSTS) are compositionally biased toward low complexity. The stretch at 681–767 (SVRISWISQF…NTVDTDFSKD (87 aa)) forms a coiled coil. Residues 1115–1195 (SKPNANPFLL…AYAGKILRYQ (81 aa)) constitute a DNA-binding region (HMG box). FAD-binding positions include Asp1147 and 1156 to 1157 (ET). Residues 1215-1273 (KCQDEPIPDDEARLFMQAQREEEQRKQTQDDNISKSREASDEEYHDDGSSDSGYNGTRY) are disordered. Basic and acidic residues predominate over residues 1233-1253 (QREEEQRKQTQDDNISKSREA). Residues 1264 to 1273 (SDSGYNGTRY) show a composition bias toward polar residues.

Belongs to the flavin monoamine oxidase family. Component of the SWM histone demethylase complex composed of at least lsd1, lsd2, phf1 and phf2. Interacts directly with lsd1. FAD serves as cofactor.

The protein localises to the nucleus. In terms of biological role, catalytic component of the SWM histone demethylase complex that specifically demethylates H3K9me2, a specific tag for epigenetic transcriptional activation, thereby acting as a corepressor. Acts by oxidizing the substrate by FAD to generate the corresponding imine that is subsequently hydrolyzed. Has a role in regulating heterochromatin propagation and euchromatic transcription. Also has a gene activating role. In Schizosaccharomyces pombe (strain 972 / ATCC 24843) (Fission yeast), this protein is Lysine-specific histone demethylase 2 (lsd2).